The following is a 348-amino-acid chain: MSKQTLILLYGGRSAEREVSVLSAESVMRAIDYTKFFVKTYFISQTGQFIKTQEFSSQPAATERLMTNATIRLEQQIRPSDIYEEGAVVFPVLHGPMGEDGSIQGFLEVLKMPYVGTNILSSSVAMDKITTKRVLESADIPQVAYTVYIEGQDLDRCLAETEAVLSYPVFVKPANMGSSVGISKAESEEELRAAILLALTYDSRILIEQGVLAREIEVGLLGNTDVKSTLPGEVVKNVDFYDYQAKYIDNEITMAIPAAIDESAMTSMRTYAETAFKAIGACGLSRCDFFLGQDGQIYLNELNTMPGFTQWSMYPLLWEHMGLSYAELIEELVRLAQEMFEKREGHLI.

Positions 132–334 (KRVLESADIP…YAELIEELVR (203 aa)) constitute an ATP-grasp domain. 162–217 (EAVLSYPVFVKPANMGSSVGISKAESEEELRAAILLALTYDSRILIEQGVLAREIE) is an ATP binding site. D288, E301, and N303 together coordinate Mg(2+).

It belongs to the D-alanine--D-alanine ligase family. Mg(2+) is required as a cofactor. The cofactor is Mn(2+).

Its subcellular location is the cytoplasm. The enzyme catalyses 2 D-alanine + ATP = D-alanyl-D-alanine + ADP + phosphate + H(+). It functions in the pathway cell wall biogenesis; peptidoglycan biosynthesis. Its function is as follows. Cell wall formation. This is D-alanine--D-alanine ligase from Streptococcus equi subsp. zooepidemicus (strain MGCS10565).